Here is a 620-residue protein sequence, read N- to C-terminus: Ran-binding protein 10 (620 aa).

The disordered stretch occupies residues 1–34 (MAAATADPGAGSPQVGDSSGGATGCGLPSPGEQE). An N-acetylalanine modification is found at Ala-2. The 188-residue stretch at 35–222 (LSRRLQRLYP…VDANFGQQPF (188 aa)) folds into the B30.2/SPRY domain. The LisH domain maps to 253–285 (WQAVLQNMVSSYLVHHGYCATATAFARMTETPI). The CTLH domain maps to 291–348 (SIKNRQKIQKLVLEGRVGEAIETTQRFYPGLLEHNPNLLFMLKCRQFVEMVNGTDSEV). A compositionally biased stretch (polar residues) spans 347 to 398 (EVRSLSSRSPKSQDSYPGSPSLSPRHGPTSSHTHNTGADSPSCSNGVASTKS). The disordered stretch occupies residues 347–459 (EVRSLSSRSP…TSDSEMEMEA (113 aa)). Ser-361 carries the phosphoserine modification. A Phosphotyrosine modification is found at Tyr-362. Ser-365, Ser-367, Ser-369, and Ser-422 each carry phosphoserine. Positions 409-436 (SSSSSSSSSSSSSSPSSVNYSESNSTDS) are enriched in low complexity. The segment covering 437–450 (TKSQPHSSTSNQET) has biased composition (polar residues). A phosphoserine mark is found at Ser-451 and Ser-453.

It belongs to the RANBP9/10 family. In terms of assembly, may form homodimers. Identified in the CTLH complex that contains GID4, RANBP9 and/or RANBP10, MKLN1, MAEA, RMND5A (or alternatively its paralog RMND5B), GID8, ARMC8, WDR26 and YPEL5. Within this complex, MAEA, RMND5A (or alternatively its paralog RMND5B), GID8, WDR26, and RANBP9 and/or RANBP10 form the catalytic core, while GID4, MKLN1, ARMC8 and YPEL5 have ancillary roles. Interacts with RAN and RANBP9. Interacts with the HGF receptor MET. Interacts with AR. Interacts with TUBB1. Interacts with YPEL5. May interact with TUBB5. Interacts with DDX4.

It is found in the cytoplasm. The protein localises to the cytosol. It localises to the nucleus. Functionally, may act as an adapter protein to couple membrane receptors to intracellular signaling pathways. Core component of the CTLH E3 ubiquitin-protein ligase complex that selectively accepts ubiquitin from UBE2H and mediates ubiquitination and subsequent proteasomal degradation of the transcription factor HBP1. Enhances dihydrotestosterone-induced transactivation activity of AR, as well as dexamethasone-induced transactivation activity of NR3C1, but does not affect estrogen-induced transactivation. Acts as a guanine nucleotide exchange factor (GEF) for RAN GTPase. May play an essential role in hemostasis and in maintaining microtubule dynamics with respect to both platelet shape and function. This Bos taurus (Bovine) protein is Ran-binding protein 10 (RANBP10).